The chain runs to 347 residues: MSVMFDPDTAIYPFPPKPTPLSIDEKAYYREKIKRLLKERNAVMVAHYYTDPEIQQLAEETGGCISDSLEMARFGAKHPASTLLVAGVRFMGETAKILSPEKTILMPTLQVECSLDLGCPVEEFNAFCDAHPDRTVVVYANTSAAVKARADWVVTSSIAVELIDHLDSLGEKIIWAPDKHLGRYVQKQTGGDILCWQGACIVHDEFKTQALTRLQEEYPDAAILVHPESPQAIVDMADAVGSTSQLIAAAKALPHQRLIVATDRGIFYKMQQAVPDKELLEAPTAGEGATCRSCAHCPWMAMNGLQAIAEALEQEGSNHEVHVDERLRERALVPLNRMLDFAATLRG.

Histidine 47 and serine 68 together coordinate iminosuccinate. Cysteine 113 provides a ligand contact to [4Fe-4S] cluster. Iminosuccinate contacts are provided by residues 139–141 (YAN) and serine 156. Position 200 (cysteine 200) interacts with [4Fe-4S] cluster. Iminosuccinate-binding positions include 226 to 228 (HPE) and threonine 243. Cysteine 297 is a binding site for [4Fe-4S] cluster.

It belongs to the quinolinate synthase family. Type 1 subfamily. [4Fe-4S] cluster serves as cofactor.

It is found in the cytoplasm. It carries out the reaction iminosuccinate + dihydroxyacetone phosphate = quinolinate + phosphate + 2 H2O + H(+). The protein operates within cofactor biosynthesis; NAD(+) biosynthesis; quinolinate from iminoaspartate: step 1/1. In terms of biological role, catalyzes the condensation of iminoaspartate with dihydroxyacetone phosphate to form quinolinate. The sequence is that of Quinolinate synthase from Shigella flexneri serotype 5b (strain 8401).